The sequence spans 384 residues: S-adenosylmethionine synthase (384 aa).

Residue H15 coordinates ATP. Residue D17 participates in Mg(2+) binding. E43 contributes to the K(+) binding site. Residues E56 and Q99 each coordinate L-methionine. A flexible loop region spans residues 99–109 (QSPDINQGVDK). ATP-binding positions include 164–166 (DAK), 230–231 (RF), D239, 245–246 (RK), A262, and K266. D239 contacts L-methionine. K270 serves as a coordination point for L-methionine.

It belongs to the AdoMet synthase family. As to quaternary structure, homotetramer; dimer of dimers. Requires Mg(2+) as cofactor. The cofactor is K(+).

The protein localises to the cytoplasm. The catalysed reaction is L-methionine + ATP + H2O = S-adenosyl-L-methionine + phosphate + diphosphate. The protein operates within amino-acid biosynthesis; S-adenosyl-L-methionine biosynthesis; S-adenosyl-L-methionine from L-methionine: step 1/1. Its function is as follows. Catalyzes the formation of S-adenosylmethionine (AdoMet) from methionine and ATP. The overall synthetic reaction is composed of two sequential steps, AdoMet formation and the subsequent tripolyphosphate hydrolysis which occurs prior to release of AdoMet from the enzyme. The polypeptide is S-adenosylmethionine synthase (Aliivibrio fischeri (strain ATCC 700601 / ES114) (Vibrio fischeri)).